The primary structure comprises 410 residues: Platelet-activating factor acetylhydrolase IB subunit beta (410 aa).

Residues Met-1–Asp-38 form a required for self-association and interaction with PAFAH1B2 and PAFAH1B3 region. Positions Met-1–Met-66 are interaction with NDE1. Residues Met-1–Tyr-102 form an interaction with NDEL1 region. A LisH domain is found at Gln-7–Met-39. At Lys-53 the chain carries N6-acetyllysine. A coiled-coil region spans residues Thr-56 to Gly-82. The segment at Gly-83–Arg-410 is interaction with dynein and dynactin. 7 WD repeats span residues Gly-106–Lys-147, Gly-148–Thr-187, Gly-190–Thr-229, Gly-232–Glu-271, Glu-274–Thr-333, Gly-336–Asn-377, and Ala-378–Arg-410. A Phosphoserine modification is found at Ser-109. An interaction with DCX region spans residues Tyr-367 to Cys-409. Residues Phe-388–Arg-410 form an interaction with NDEL1 region.

The protein belongs to the WD repeat LIS1/nudF family. In terms of assembly, can self-associate. Component of the cytosolic PAF-AH (I) heterotetrameric enzyme, which is composed of PAFAH1B1 (beta), PAFAH1B2 (alpha2) and PAFAH1B3 (alpha1) subunits. The catalytic activity of the enzyme resides in the alpha1 (PAFAH1B3) and alpha2 (PAFAH1B2) subunits, whereas the beta subunit (PAFAH1B1) has regulatory activity. Trimer formation is not essential for the catalytic activity. Interacts with the catalytic dimer of PAF-AH (I) heterotetrameric enzyme: interacts with PAFAH1B2 homodimer (alpha2/alpha2 homodimer), PAFAH1B3 homodimer (alpha1/alpha1 homodimer) and PAFAH1B2-PAFAH1B3 heterodimer (alpha2/alpha1 heterodimer). Interacts with DCX, dynein, dynactin, IQGAP1, KATNB1, NDE1, NDEL1, NUDC and RSN. Interacts with DISC1, and this interaction is enhanced by NDEL1. Interacts with DAB1 when DAB1 is phosphorylated in response to RELN/reelin signaling. Interacts with INTS13. Interacts with DCDC1.

The protein localises to the cytoplasm. Its subcellular location is the cytoskeleton. It is found in the microtubule organizing center. It localises to the centrosome. The protein resides in the spindle. The protein localises to the nucleus membrane. In terms of biological role, regulatory subunit (beta subunit) of the cytosolic type I platelet-activating factor (PAF) acetylhydrolase (PAF-AH (I)), an enzyme that catalyzes the hydrolyze of the acetyl group at the sn-2 position of PAF and its analogs and participates in PAF inactivation. Regulates the PAF-AH (I) activity in a catalytic dimer composition-dependent manner. Positively regulates the activity of the minus-end directed microtubule motor protein dynein. May enhance dynein-mediated microtubule sliding by targeting dynein to the microtubule plus end. Required for several dynein- and microtubule-dependent processes such as the maintenance of Golgi integrity, the peripheral transport of microtubule fragments and the coupling of the nucleus and centrosome. Required during brain development for the proliferation of neuronal precursors and the migration of newly formed neurons from the ventricular/subventricular zone toward the cortical plate. Neuronal migration involves a process called nucleokinesis, whereby migrating cells extend an anterior process into which the nucleus subsequently translocates. During nucleokinesis dynein at the nuclear surface may translocate the nucleus towards the centrosome by exerting force on centrosomal microtubules. Also required for proper activation of Rho GTPases and actin polymerization at the leading edge of locomoting cerebellar neurons and postmigratory hippocampal neurons in response to calcium influx triggered via NMDA receptors. May also play a role in other forms of cell locomotion including the migration of fibroblasts during wound healing. Required for dynein recruitment to microtubule plus ends and BICD2-bound cargos. May modulate the Reelin pathway through interaction of the PAF-AH (I) catalytic dimer with VLDLR. The polypeptide is Platelet-activating factor acetylhydrolase IB subunit beta (Felis catus (Cat)).